Reading from the N-terminus, the 155-residue chain is Ribonuclease H (155 aa).

Residues 1–142 enclose the RNase H type-1 domain; sequence MLKQVEIFTD…CDELARAAAM (142 aa). Residues Asp10, Glu48, Asp70, and Asp134 each coordinate Mg(2+).

Belongs to the RNase H family. Monomer. Mg(2+) is required as a cofactor.

The protein resides in the cytoplasm. It carries out the reaction Endonucleolytic cleavage to 5'-phosphomonoester.. Its function is as follows. Endonuclease that specifically degrades the RNA of RNA-DNA hybrids. In Escherichia coli (strain 55989 / EAEC), this protein is Ribonuclease H.